The chain runs to 89 residues: Large ribosomal subunit protein eL34 (89 aa).

A disordered region spans residues 1-22 (MPAPRYKSGSSKKVYRKAPGNS).

It belongs to the eukaryotic ribosomal protein eL34 family.

This chain is Large ribosomal subunit protein eL34, found in Methanococcus maripaludis (strain DSM 14266 / JCM 13030 / NBRC 101832 / S2 / LL).